A 471-amino-acid polypeptide reads, in one-letter code: Argininosuccinate lyase (471 aa).

Belongs to the lyase 1 family. Argininosuccinate lyase subfamily.

The protein resides in the cytoplasm. The enzyme catalyses 2-(N(omega)-L-arginino)succinate = fumarate + L-arginine. Its pathway is amino-acid biosynthesis; L-arginine biosynthesis; L-arginine from L-ornithine and carbamoyl phosphate: step 3/3. The chain is Argininosuccinate lyase from Ralstonia pickettii (strain 12J).